The chain runs to 501 residues: NAD(P)H-quinone oxidoreductase chain 4, chloroplastic (501 aa).

Transmembrane regions (helical) follow at residues Phe4–Leu24, Leu37–Phe57, Ile87–Ile107, Leu113–Ala130, Ile134–Met154, Phe167–Leu187, Ile207–Met227, His242–Ile262, Ser274–Thr294, Val310–Gly330, Ala331–Val351, Met364–Ala384, Ser385–Val405, Val416–Met436, and Ile462–Val482.

Belongs to the complex I subunit 4 family.

It localises to the plastid. The protein localises to the chloroplast thylakoid membrane. The catalysed reaction is a plastoquinone + NADH + (n+1) H(+)(in) = a plastoquinol + NAD(+) + n H(+)(out). It carries out the reaction a plastoquinone + NADPH + (n+1) H(+)(in) = a plastoquinol + NADP(+) + n H(+)(out). The chain is NAD(P)H-quinone oxidoreductase chain 4, chloroplastic (ndhD) from Anthoceros angustus (Hornwort).